Here is a 97-residue protein sequence, read N- to C-terminus: Mitochondrial import inner membrane translocase subunit Tim8 A (97 aa).

The short motif at 43–66 (CWEKCMDKPGPKLDSRAEACFVNC) is the Twin CX3C motif element. 2 disulfides stabilise this stretch: Cys43–Cys66 and Cys47–Cys62. 4 positions are modified to phosphoserine: Ser57, Ser87, Ser94, and Ser96.

It belongs to the small Tim family. In terms of assembly, heterohexamer; composed of 3 copies of TIMM8A and 3 copies of TIMM13, named soluble 70 kDa complex. Associates with the TIM22 complex, whose core is composed of TIMM22. As to expression, present at high level in liver and brain, and at lower level in muscle and heart. In CNS sections, it is predominantly present in the soma and the dendritic portion of the Purkinje cells of the cerebellum, but not in the glial cells. Scattered expression also is also detected in the brain stem, olfactory bulb, substantia nigra, hippocampus and striatum (at protein level). Ubiquitously expressed.

Its subcellular location is the mitochondrion inner membrane. Its function is as follows. Mitochondrial intermembrane chaperone that participates in the import and insertion of some multi-pass transmembrane proteins into the mitochondrial inner membrane. Also required for the transfer of beta-barrel precursors from the TOM complex to the sorting and assembly machinery (SAM complex) of the outer membrane. Acts as a chaperone-like protein that protects the hydrophobic precursors from aggregation and guide them through the mitochondrial intermembrane space. The TIMM8-TIMM13 complex mediates the import of proteins such as TIMM23, SLC25A12/ARALAR1 and SLC25A13/ARALAR2, while the predominant TIMM9-TIMM10 70 kDa complex mediates the import of much more proteins. The sequence is that of Mitochondrial import inner membrane translocase subunit Tim8 A (Timm8a1) from Mus musculus (Mouse).